The sequence spans 191 residues: Large ribosomal subunit protein bL25 (191 aa).

The protein belongs to the bacterial ribosomal protein bL25 family. CTC subfamily. As to quaternary structure, part of the 50S ribosomal subunit; part of the 5S rRNA/L5/L18/L25 subcomplex. Contacts the 5S rRNA. Binds to the 5S rRNA independently of L5 and L18.

In terms of biological role, this is one of the proteins that binds to the 5S RNA in the ribosome where it forms part of the central protuberance. This Nitratidesulfovibrio vulgaris (strain DSM 19637 / Miyazaki F) (Desulfovibrio vulgaris) protein is Large ribosomal subunit protein bL25.